The following is a 290-amino-acid chain: Acetylglutamate kinase (290 aa).

Substrate-binding positions include 65-66 (GG), arginine 87, and asparagine 186.

It belongs to the acetylglutamate kinase family. ArgB subfamily.

It localises to the cytoplasm. The enzyme catalyses N-acetyl-L-glutamate + ATP = N-acetyl-L-glutamyl 5-phosphate + ADP. It functions in the pathway amino-acid biosynthesis; L-arginine biosynthesis; N(2)-acetyl-L-ornithine from L-glutamate: step 2/4. Catalyzes the ATP-dependent phosphorylation of N-acetyl-L-glutamate. The sequence is that of Acetylglutamate kinase from Mycolicibacterium gilvum (strain PYR-GCK) (Mycobacterium gilvum (strain PYR-GCK)).